A 434-amino-acid chain; its full sequence is Protein arginine N-methyltransferase 2 (434 aa).

Positions 155–198 (IQGEETTEEERKEEEPSNTSDIIDEQKVEQPKEDLKEDPSSNQE) are disordered. Basic and acidic residues predominate over residues 178-193 (DEQKVEQPKEDLKEDP). The RMT2 domain occupies 193-434 (PSSNQETYLK…YHPEARFMDV (242 aa)). Residues Tyr200, Met230, 258–263 (FGMGII), 279–281 (EAH), 306–307 (WQ), and Asp327 each bind S-adenosyl-L-methionine.

This sequence belongs to the class I-like SAM-binding methyltransferase superfamily. RMT2 methyltransferase family. As to quaternary structure, monomer.

The protein localises to the cytoplasm. Its subcellular location is the nucleus. S-adenosyl-L-methionine-dependent protein-arginine N-methyltransferase that methylates the delta-nitrogen atom of arginine residues to form N5-methylarginine (type IV) in target proteins. Monomethylates ribosomal protein L12. The chain is Protein arginine N-methyltransferase 2 from Debaryomyces hansenii (strain ATCC 36239 / CBS 767 / BCRC 21394 / JCM 1990 / NBRC 0083 / IGC 2968) (Yeast).